A 1137-amino-acid chain; its full sequence is Eukaryotic translation initiation factor 3 subunit A (1137 aa).

The 183-residue stretch at 319–501 (LQRMAAHVLL…NSIYFGTDLT (183 aa)) folds into the PCI domain. Basic and acidic residues-rich tracts occupy residues 588–623 (QNNAREEEEARRQEEESRKAKLAEQKRLEQEQEERE) and 829–899 (AAEE…RGGD). Disordered stretches follow at residues 588–631 (QNNA…QNEI) and 829–1137 (AAEE…VKRR). Phosphoserine is present on serine 908. Composition is skewed to basic and acidic residues over residues 922-971 (RGIE…EPDS), 985-1046 (SRDE…EPQR), 1054-1083 (DAPRHADRENRRTAGGERRDRDVRETRGDQ), and 1106-1127 (AREEKPATKRDQPQEKENKAAD).

The protein belongs to the eIF-3 subunit A family. Component of the eukaryotic translation initiation factor 3 (eIF-3) complex. The eIF-3 complex interacts with pix.

The protein resides in the cytoplasm. RNA-binding component of the eukaryotic translation initiation factor 3 (eIF-3) complex, which is involved in protein synthesis of a specialized repertoire of mRNAs and, together with other initiation factors, stimulates binding of mRNA and methionyl-tRNAi to the 40S ribosome. The eIF-3 complex specifically targets and initiates translation of a subset of mRNAs involved in cell proliferation. In Drosophila yakuba (Fruit fly), this protein is Eukaryotic translation initiation factor 3 subunit A.